The following is a 443-amino-acid chain: Ribosomal protein uS12 methylthiotransferase RimO (443 aa).

The MTTase N-terminal domain occupies 10-120; sequence PRVGFVSLGC…VMAAVHAQCP (111 aa). Residues C19, C55, C84, C152, C156, and C159 each contribute to the [4Fe-4S] cluster site. The Radical SAM core domain maps to 138 to 375; the sequence is LTPRHYAYLK…MALQAEISAR (238 aa). Positions 378–443 constitute a TRAM domain; it reads ARRVGTECTV…DEHDLYGRVL (66 aa).

This sequence belongs to the methylthiotransferase family. RimO subfamily. The cofactor is [4Fe-4S] cluster.

The protein resides in the cytoplasm. It carries out the reaction L-aspartate(89)-[ribosomal protein uS12]-hydrogen + (sulfur carrier)-SH + AH2 + 2 S-adenosyl-L-methionine = 3-methylsulfanyl-L-aspartate(89)-[ribosomal protein uS12]-hydrogen + (sulfur carrier)-H + 5'-deoxyadenosine + L-methionine + A + S-adenosyl-L-homocysteine + 2 H(+). Functionally, catalyzes the methylthiolation of an aspartic acid residue of ribosomal protein uS12. The chain is Ribosomal protein uS12 methylthiotransferase RimO from Alkalilimnicola ehrlichii (strain ATCC BAA-1101 / DSM 17681 / MLHE-1).